Consider the following 1025-residue polypeptide: Protein mono-ADP-ribosyltransferase PARP10 (1025 aa).

At Thr-101 the chain carries Phosphothreonine. Glu-106 is modified (ADP-ribosyl glutamic acid). An N6-(ADP-ribosyl)lysine modification is found at Lys-140. Positions 318 to 346 (GIMTTGSGQEPGQSGTSLRTGPMGSLGQA) are disordered. The span at 321–336 (TTGSGQEPGQSGTSLR) shows a compositional bias: polar residues. Ser-378, Ser-423, and Ser-431 each carry phosphoserine. 2 disordered regions span residues 569–589 (VLPG…DQED) and 617–644 (LEEE…APST). Positions 617–639 (LEEEGPQEQPEEEVTPGHEEEEP) are enriched in acidic residues. 2 short sequence motifs (ubiquitin-interacting) span residues 650 to 667 (LEEE…LEPQ) and 673 to 690 (QEEA…LLEQ). Ser-663 bears the Phosphoserine mark. The interval 700 to 907 (DGGTDGKAQL…CAHGFNRSFC (208 aa)) is myc binding. Residues 806 to 1025 (PTLAGQTLKG…SGLPGRSPDT (220 aa)) enclose the PARP catalytic domain. The PIP-box motif lies at 831 to 838 (QEVVRAFY). Glu-882 carries the ADP-ribosyl glutamic acid modification. Lys-916 bears the N6-(ADP-ribosyl)lysine mark. An N6-acetyllysine modification is found at Lys-916. A disordered region spans residues 1006-1025 (HVPRASPDDPSGLPGRSPDT). Position 1011 is a phosphoserine (Ser-1011).

The protein belongs to the ARTD/PARP family. Interacts with MYC. Interacts with PARP14. Interacts (via-PIP box and ubiquitin-interacting motifs) with PCNA. In terms of processing, stimulated through its phosphorylation by CDK2. Acquires CDK-dependent phosphorylation through late-G1 to S phase, and from prometaphase to cytokinesis in the nucleolar organizing regions. Phosphorylation is suppressed in growth-arrested cells. Post-translationally, auto-mono-ADP-ribosylated on glutamate and lysine residues. As to expression, highly expressed in spleen and thymus. Intermediate levels in liver, kidney, pancreas, prostate, testis, ovary, intestine, and leukocytes. Low expression in heart, brain, placenta, lung, skeletal muscle, and colon.

It localises to the nucleus. Its subcellular location is the nucleolus. It is found in the cytoplasm. The catalysed reaction is L-lysyl-[protein] + NAD(+) = N(6)-(ADP-D-ribosyl)-L-lysyl-[protein] + nicotinamide + H(+). It catalyses the reaction L-aspartyl-[protein] + NAD(+) = 4-O-(ADP-D-ribosyl)-L-aspartyl-[protein] + nicotinamide. It carries out the reaction L-glutamyl-[protein] + NAD(+) = 5-O-(ADP-D-ribosyl)-L-glutamyl-[protein] + nicotinamide. ADP-ribosyltransferase that mediates mono-ADP-ribosylation of glutamate and aspartate residues on target proteins. In contrast to PARP1 and PARP2, it is not able to mediate poly-ADP-ribosylation. Catalyzes mono-ADP-ribosylation of GSK3B, leading to negatively regulate GSK3B kinase activity. Involved in translesion DNA synthesis in response to DNA damage via its interaction with PCNA. In Homo sapiens (Human), this protein is Protein mono-ADP-ribosyltransferase PARP10.